The primary structure comprises 540 residues: Chaperonin GroEL 2 (540 aa).

Residues 30–33 (TLGP), Lys51, 87–91 (DGTTT), Gly415, 479–481 (NAA), and Asp495 each bind ATP.

The protein belongs to the chaperonin (HSP60) family. Forms a cylinder of 14 subunits composed of two heptameric rings stacked back-to-back. Interacts with the co-chaperonin GroES.

Its subcellular location is the cytoplasm. It carries out the reaction ATP + H2O + a folded polypeptide = ADP + phosphate + an unfolded polypeptide.. Functionally, together with its co-chaperonin GroES, plays an essential role in assisting protein folding. The GroEL-GroES system forms a nano-cage that allows encapsulation of the non-native substrate proteins and provides a physical environment optimized to promote and accelerate protein folding. In Burkholderia vietnamiensis (strain G4 / LMG 22486) (Burkholderia cepacia (strain R1808)), this protein is Chaperonin GroEL 2.